The chain runs to 213 residues: Small ribosomal subunit protein eS6 (213 aa).

This sequence belongs to the eukaryotic ribosomal protein eS6 family.

This Sulfolobus acidocaldarius (strain ATCC 33909 / DSM 639 / JCM 8929 / NBRC 15157 / NCIMB 11770) protein is Small ribosomal subunit protein eS6.